The chain runs to 422 residues: 4-hydroxy-3-methylbut-2-en-1-yl diphosphate synthase (flavodoxin) (422 aa).

Cysteine 316, cysteine 319, cysteine 362, and glutamate 369 together coordinate [4Fe-4S] cluster.

The protein belongs to the IspG family. [4Fe-4S] cluster is required as a cofactor.

It carries out the reaction (2E)-4-hydroxy-3-methylbut-2-enyl diphosphate + oxidized [flavodoxin] + H2O + 2 H(+) = 2-C-methyl-D-erythritol 2,4-cyclic diphosphate + reduced [flavodoxin]. It functions in the pathway isoprenoid biosynthesis; isopentenyl diphosphate biosynthesis via DXP pathway; isopentenyl diphosphate from 1-deoxy-D-xylulose 5-phosphate: step 5/6. In terms of biological role, converts 2C-methyl-D-erythritol 2,4-cyclodiphosphate (ME-2,4cPP) into 1-hydroxy-2-methyl-2-(E)-butenyl 4-diphosphate. This is 4-hydroxy-3-methylbut-2-en-1-yl diphosphate synthase (flavodoxin) from Anaplasma marginale (strain St. Maries).